We begin with the raw amino-acid sequence, 502 residues long: Probable cytosol aminopeptidase (502 aa).

2 residues coordinate Mn(2+): Lys-269 and Asp-274. Residue Lys-281 is part of the active site. Asp-292, Asp-351, and Glu-353 together coordinate Mn(2+). The active site involves Arg-355.

Belongs to the peptidase M17 family. Mn(2+) serves as cofactor.

The protein resides in the cytoplasm. It catalyses the reaction Release of an N-terminal amino acid, Xaa-|-Yaa-, in which Xaa is preferably Leu, but may be other amino acids including Pro although not Arg or Lys, and Yaa may be Pro. Amino acid amides and methyl esters are also readily hydrolyzed, but rates on arylamides are exceedingly low.. It carries out the reaction Release of an N-terminal amino acid, preferentially leucine, but not glutamic or aspartic acids.. Functionally, presumably involved in the processing and regular turnover of intracellular proteins. Catalyzes the removal of unsubstituted N-terminal amino acids from various peptides. The polypeptide is Probable cytosol aminopeptidase (Aliivibrio fischeri (strain MJ11) (Vibrio fischeri)).